A 510-amino-acid polypeptide reads, in one-letter code: Rab proteins geranylgeranyltransferase component A 1 (510 aa).

The protein belongs to the Rab GDI family. In terms of assembly, may interact with rab-5, rab-7 and rab-11. Does not interact with rab-3, rab-27 and rab-10. In terms of tissue distribution, expressed in several neurons including head neurons, motor neurons located in the ventral nerve cord, HSN and CAN neurons, and tail neurons, and in muscles such as body-wall, pharyngeal, intestinal and anal sphincter. Also expressed in seam cells, the hypodermis and the intestine.

The protein localises to the cytoplasm. Functionally, substrate-binding subunit of the Rab geranylgeranyltransferase (GGTase) complex. Binds unprenylated Rab proteins and presents the substrate peptide to the catalytic component B and remains bound to it after the geranylgeranyl transfer reaction. The component A is thought to be regenerated by transferring its prenylated Rab back to the donor membrane. Plays a role in neurotransmitter release from presynaptic terminals at neuromuscular junctions. Positively regulates the function of rab-27 in synaptic transmission most likely through mediating rab-27 prenylation. The protein is Rab proteins geranylgeranyltransferase component A 1 of Caenorhabditis elegans.